Here is a 126-residue protein sequence, read N- to C-terminus: Large ribosomal subunit protein bL17 (126 aa).

This sequence belongs to the bacterial ribosomal protein bL17 family. Part of the 50S ribosomal subunit. Contacts protein L32.

This chain is Large ribosomal subunit protein bL17, found in Vibrio parahaemolyticus serotype O3:K6 (strain RIMD 2210633).